Consider the following 217-residue polypeptide: Protein 33K (217 aa).

A disordered region spans residues M1–R142. The span at Q24–I68 shows a compositional bias: acidic residues. The segment covering I69 to K78 has biased composition (low complexity). A compositionally biased stretch (basic and acidic residues) spans K123 to T136. Positions Y160–C187 are necessary for nuclear subcellular location. The RS-repeat; required for splicing enhancer activity stretch occupies residues S166–S186.

It belongs to the adenoviridae splicing factor family. In terms of assembly, homooligomer. Interacts with DBP; this interaction occurs at a unique vertex during genome packaging. Interacts with IVa2; this interaction occurs at a unique vertex during genome packaging and seems to potentiate IVa2 and 33K oligomerization. In terms of processing, phosphorylated in vitro by human PKA and PRKDC. PRKDC inhibits, whereas PKA activates the splicing factor.

Its subcellular location is the host nucleus. Functionally, promotes alternative splicing of late transcripts by promoting splicing at weak 3' splice sites. Required for the temporal activation of major late pre-mRNA splicing at late times of infection. Induces the splicing and expression of the late capsid vertex protein. Its function is as follows. Probably functions as the small terminase that is part of the molecular motor that translocates genomic DNA in empty capsid during DNA packaging. This motor is located at a unique vertex and comprises at least the IVa2 ATPase, the small terminase 33K and probably a portal. Forms a ring-like structure of about 17 nm in which genomic DNA is translocated into the capsid. Stimulates IVa2 ATPase activity in the presence of the viral genome. Once the DNA is packaged, the terminase detaches: the 33K protein is present in the empty particles, but not in the mature virions. Also involved in virion assembly. The sequence is that of Protein 33K from Human adenovirus F serotype 41 (HAdV-41).